The sequence spans 235 residues: Glycerol-3-phosphate acyltransferase (235 aa).

6 helical membrane-spanning segments follow: residues 4–24 (LLAILTVSYIIGSIPTSIMAG), 56–76 (TVTLIDIVKGVVAAVSVVAFF), 94–114 (LLAGMSAVIGHVFTVFAGFKG), 126–146 (IGIAPVSMLMVIGIFLLTVWF), 152–172 (VASIFAAVAFPLIIAIRKYVF), and 194–214 (SLDYHLIIFGLLVAFAILFTH).

It belongs to the PlsY family. As to quaternary structure, probably interacts with PlsX.

It is found in the cell inner membrane. The enzyme catalyses an acyl phosphate + sn-glycerol 3-phosphate = a 1-acyl-sn-glycero-3-phosphate + phosphate. It participates in lipid metabolism; phospholipid metabolism. Catalyzes the transfer of an acyl group from acyl-phosphate (acyl-PO(4)) to glycerol-3-phosphate (G3P) to form lysophosphatidic acid (LPA). This enzyme utilizes acyl-phosphate as fatty acyl donor, but not acyl-CoA or acyl-ACP. The chain is Glycerol-3-phosphate acyltransferase from Chlorobium phaeovibrioides (strain DSM 265 / 1930) (Prosthecochloris vibrioformis (strain DSM 265)).